A 183-amino-acid polypeptide reads, in one-letter code: Ribosome rescue factor SmrB (183 aa).

One can recognise a Smr domain in the interval 98–173; it reads LDLHGLTQLQ…GDAALLVLIE (76 aa).

Belongs to the SmrB family. In terms of assembly, associates with collided ribosomes, but not with correctly translating polysomes.

In terms of biological role, acts as a ribosome collision sensor. Detects stalled/collided disomes (pairs of ribosomes where the leading ribosome is stalled and a second ribosome has collided with it) and endonucleolytically cleaves mRNA at the 5' boundary of the stalled ribosome. Stalled/collided disomes form a new interface (primarily via the 30S subunits) that binds SmrB. Cleaved mRNA becomes available for tmRNA ligation, leading to ribosomal subunit dissociation and rescue of stalled ribosomes. The sequence is that of Ribosome rescue factor SmrB from Shigella dysenteriae serotype 1 (strain Sd197).